The primary structure comprises 878 residues: Aconitase htyD (878 aa).

Substrate contacts are provided by residues glutamine 173 and 290–292 (DSH). Positions 472, 535, and 538 each coordinate [4Fe-4S] cluster. Substrate contacts are provided by arginine 558 and arginine 563. The tract at residues 626–671 (IAIANQRTKPAPTMPAYVEPYRSFQPPVPPSSDQPQSMKDHGKTSN) is disordered. 742-743 (SR) provides a ligand contact to substrate.

The protein belongs to the aconitase/IPM isomerase family.

The protein operates within antifungal biosynthesis. Aconitase; part of the gene cluster that mediates the de novo generation of L-homotyrosine from acetyl-CoA and 4-hydroxyphenyl-pyruvate. L-homotyrosine is a building block of echinocandin B, a fungal lipidated cyclic hexapeptide that acts as an antifungal agent. L-homotyrosine 4-hydroxyphenyl-pyruvate first undergoes an aldol-type condensation by htyA with the C-2 of acetyl-CoA followed by the release of CoA to form 2-(4-hydroxybenzyl)-malate. This is followed by isomerization of 2-(4-hydroxy-benzyl)-malate to 3-(4-hydroxybenzyl)-malate by htyD. Thereafter, 3-(4-hydroxybenzyl)-malate undergoes decarboxylation and oxidation to form 2-oxo-4-(4-hydroxybenzyl)butanoic acid, coupled to reduction of NAD(+) to NADH by htyC. The product then undergoes transamination catalyzed by htyB to form L-homotyrosine. This chain is Aconitase htyD, found in Aspergillus rugulosus (Emericella rugulosa).